A 536-amino-acid polypeptide reads, in one-letter code: Phosphoenolpyruvate carboxykinase (ATP) (536 aa).

Substrate is bound by residues Arg62, Tyr203, and Lys209. Residues Lys209, His228, and 244–252 (GLSGTGKTT) each bind ATP. 2 residues coordinate Mn(2+): Lys209 and His228. Asp265 contributes to the Mn(2+) binding site. ATP is bound by residues Glu293, Arg329, 445–446 (RI), and Thr451. Arg329 provides a ligand contact to substrate.

It belongs to the phosphoenolpyruvate carboxykinase (ATP) family. In terms of assembly, monomer. Mn(2+) serves as cofactor.

It is found in the cytoplasm. The enzyme catalyses oxaloacetate + ATP = phosphoenolpyruvate + ADP + CO2. It functions in the pathway carbohydrate biosynthesis; gluconeogenesis. Involved in the gluconeogenesis. Catalyzes the conversion of oxaloacetate (OAA) to phosphoenolpyruvate (PEP) through direct phosphoryl transfer between the nucleoside triphosphate and OAA. The sequence is that of Phosphoenolpyruvate carboxykinase (ATP) from Glaesserella parasuis serovar 5 (strain SH0165) (Haemophilus parasuis).